A 475-amino-acid chain; its full sequence is Adenosylhomocysteinase (475 aa).

Substrate-binding residues include threonine 63, aspartate 138, and glutamate 199. NAD(+) is bound at residue threonine 200–threonine 202. 2 residues coordinate substrate: lysine 229 and aspartate 233. Residues asparagine 234, glycine 263–glycine 268, glutamate 286, asparagine 321, isoleucine 342–histidine 344, and asparagine 389 contribute to the NAD(+) site.

Belongs to the adenosylhomocysteinase family. It depends on NAD(+) as a cofactor.

The protein localises to the cytoplasm. The enzyme catalyses S-adenosyl-L-homocysteine + H2O = L-homocysteine + adenosine. It functions in the pathway amino-acid biosynthesis; L-homocysteine biosynthesis; L-homocysteine from S-adenosyl-L-homocysteine: step 1/1. Functionally, may play a key role in the regulation of the intracellular concentration of adenosylhomocysteine. This is Adenosylhomocysteinase from Solibacter usitatus (strain Ellin6076).